A 92-amino-acid chain; its full sequence is Acylphosphatase (92 aa).

Residues 7 to 92 (KTRCTISGRV…DPAPAEFSVG (86 aa)) enclose the Acylphosphatase-like domain. Residues R22 and N40 contribute to the active site.

It belongs to the acylphosphatase family.

The catalysed reaction is an acyl phosphate + H2O = a carboxylate + phosphate + H(+). The protein is Acylphosphatase (acyP) of Halorhodospira halophila (strain DSM 244 / SL1) (Ectothiorhodospira halophila (strain DSM 244 / SL1)).